The following is a 50-amino-acid chain: DEAQFKECYDTCHKECSDKGNGFTFCEMKCDTDCSVKDVKEKLENYKPKN.

3 disulfides stabilise this stretch: Cys-8–Cys-34, Cys-12–Cys-30, and Cys-16–Cys-26.

In terms of tissue distribution, expressed in pollen.

The protein is Major pollen allergen Ole e 6 (OLE6) of Olea europaea (Common olive).